Consider the following 337-residue polypeptide: Ribonucleoside-diphosphate reductase small chain (337 aa).

3 residues coordinate Fe cation: Asp85, Glu116, and His119. The active site involves Tyr123. Fe cation is bound by residues Glu178, Glu212, and His215.

It belongs to the ribonucleoside diphosphate reductase small chain family. Heterodimer of a large and a small subunit. It depends on Fe cation as a cofactor.

The enzyme catalyses a 2'-deoxyribonucleoside 5'-diphosphate + [thioredoxin]-disulfide + H2O = a ribonucleoside 5'-diphosphate + [thioredoxin]-dithiol. Its function is as follows. Provides the precursors necessary for DNA synthesis. Catalyzes the biosynthesis of deoxyribonucleotides from the corresponding ribonucleotides. In Trypanosoma brucei brucei, this protein is Ribonucleoside-diphosphate reductase small chain (RNR2).